The chain runs to 212 residues: KxDL motif-containing protein CG10681 (212 aa).

The segment at Arg-128–Leu-159 is disordered. A compositionally biased stretch (low complexity) spans Glu-148–Pro-157.

The protein belongs to the KXD1 family.

The polypeptide is KxDL motif-containing protein CG10681 (Drosophila melanogaster (Fruit fly)).